The primary structure comprises 131 residues: Small ribosomal subunit protein uS9 (131 aa).

Belongs to the universal ribosomal protein uS9 family.

In Actinobacillus succinogenes (strain ATCC 55618 / DSM 22257 / CCUG 43843 / 130Z), this protein is Small ribosomal subunit protein uS9.